Here is a 314-residue protein sequence, read N- to C-terminus: Fibrinogen-like protein 1 (314 aa).

The signal sequence occupies residues 1-22; sequence MGEIRSFVLITVALILGKESWV. Positions 28-62 form a coiled coil; it reads CLQEQVRLRAQVRQLETRVKQQQVVIAQLLHEKEV. The region spanning 76 to 308 is the Fibrinogen C-terminal domain; sequence LGGKRHYADC…SVVMKIRPSD (233 aa). 2 disulfide bridges follow: cysteine 85–cysteine 114 and cysteine 250–cysteine 263.

As to quaternary structure, homodimer. Interacts (via the Fibrinogen C-terminal domain) with LAG3 (via Ig-like domains 1 and 2).

It is found in the secreted. Its function is as follows. Immune suppressive molecule that inhibits antigen-specific T-cell activation by acting as a major ligand of LAG3. Responsible for LAG3 T-cell inhibitory function. Binds LAG3 independently from MHC class II (MHC-II). Secreted by, and promotes growth of, hepatocytes. The sequence is that of Fibrinogen-like protein 1 from Rattus norvegicus (Rat).